The following is a 177-amino-acid chain: Shikimate kinase (177 aa).

17 to 22 contacts ATP; that stretch reads GVGKTT. Thr-21 is a Mg(2+) binding site. Substrate-binding residues include Asp-39, Arg-63, and Gly-86. Arg-125 contributes to the ATP binding site. Arg-143 is a binding site for substrate. Arg-159 contributes to the ATP binding site.

Belongs to the shikimate kinase family. As to quaternary structure, monomer. The cofactor is Mg(2+).

The protein localises to the cytoplasm. The catalysed reaction is shikimate + ATP = 3-phosphoshikimate + ADP + H(+). Its pathway is metabolic intermediate biosynthesis; chorismate biosynthesis; chorismate from D-erythrose 4-phosphate and phosphoenolpyruvate: step 5/7. In terms of biological role, catalyzes the specific phosphorylation of the 3-hydroxyl group of shikimic acid using ATP as a cosubstrate. This is Shikimate kinase from Bacillus licheniformis (strain ATCC 14580 / DSM 13 / JCM 2505 / CCUG 7422 / NBRC 12200 / NCIMB 9375 / NCTC 10341 / NRRL NRS-1264 / Gibson 46).